A 158-amino-acid chain; its full sequence is Cytochrome c-type biogenesis protein CcmE (158 aa).

Residues 1-7 (MKPRHRR) are Cytoplasmic-facing. Residues 8-28 (LTLIALVLGGLGLSAGLALTA) traverse the membrane as a helical; Signal-anchor for type II membrane protein segment. The Periplasmic segment spans residues 29–158 (FQDNLVFFFT…DGHPETTTAY (130 aa)). Heme is bound by residues His123 and Tyr127. The segment at 138-158 (RIGQGNGTPGPDGHPETTTAY) is disordered.

It belongs to the CcmE/CycJ family.

Its subcellular location is the cell inner membrane. Functionally, heme chaperone required for the biogenesis of c-type cytochromes. Transiently binds heme delivered by CcmC and transfers the heme to apo-cytochromes in a process facilitated by CcmF and CcmH. The sequence is that of Cytochrome c-type biogenesis protein CcmE from Alkalilimnicola ehrlichii (strain ATCC BAA-1101 / DSM 17681 / MLHE-1).